The primary structure comprises 667 residues: Interleukin-17 receptor E (667 aa).

The signal sequence occupies residues 1–23 (MGSSRLAALLLPLLLIVIDLSDS). The Extracellular segment spans residues 24-454 (AGIGFRHLPH…LLCPDVSYRH (431 aa)). Residues 126–174 (LPRRHLSEKSHHISIPSPDISHKGLRSKRTQPSDPETWESLPRLDSQRH) are disordered. N-linked (GlcNAc...) asparagine glycosylation is found at N318, N347, and N364. A helical membrane pass occupies residues 455–475 (LGLLILALLALLTLLGVVLAL). Residues 476 to 667 (TCRRPQSGPG…REAARLADLG (192 aa)) are Cytoplasmic-facing. One can recognise an SEFIR domain in the interval 487-624 (ARPVLLLHAA…LLRDLPRLLR (138 aa)).

Forms heterodimers with IL17RA; the heterodimer binds IL17C. Predominantly expressed in mucosal tissues with high levels in keratinocytes and colon epithelial cells. Very low expression in dermal fibroblasts. Expressed in various tumor cell lines.

It localises to the cell membrane. It is found in the cytoplasm. The protein localises to the secreted. Its function is as follows. Specific functional receptor for IL17C. May be signaling through the NF-kappa-B and MAPK pathways. May require TRAF3IP2 /ACT1 for signaling. May be a crucial regulator in innate immunity to bacterial pathogens. Isoform 2 and isoform 4 may be either cytoplasmic inactive or dominant active forms. Isoform 3 and isoform 5 may act as soluble decoy receptors. The protein is Interleukin-17 receptor E (IL17RE) of Homo sapiens (Human).